A 339-amino-acid chain; its full sequence is Heat-inducible transcription repressor HrcA (339 aa).

It belongs to the HrcA family.

In terms of biological role, negative regulator of class I heat shock genes (grpE-dnaK-dnaJ and groELS operons). Prevents heat-shock induction of these operons. In Paraburkholderia xenovorans (strain LB400), this protein is Heat-inducible transcription repressor HrcA.